Reading from the N-terminus, the 1083-residue chain is Carbamoyl phosphate synthase large chain (1083 aa).

Residues 1-402 (MPKRTDIRKV…AYMKALRSME (402 aa)) form a carboxyphosphate synthetic domain region. The ATP site is built by R129, R169, G175, G176, E208, V210, E215, G241, V242, H243, Q285, and E299. Positions 133–328 (KAAMQKIGVA…IAKIAAKLAL (196 aa)) constitute an ATP-grasp 1 domain. The Mg(2+) site is built by Q285, E299, and N301. Mn(2+)-binding residues include Q285, E299, and N301. The segment at 403-554 (LGRVGLESPE…YSTYEEEDEA (152 aa)) is oligomerization domain. The carbamoyl phosphate synthetic domain stretch occupies residues 555–937 (PPTDRQKVLI…AFAKSQLAAG (383 aa)). An ATP-grasp 2 domain is found at 679–871 (AALIEKLGLK…MAKIAALCMV (193 aa)). 10 residues coordinate ATP: R715, R754, L756, E761, G787, V788, H789, S790, Q830, and E842. Mg(2+) contacts are provided by Q830, E842, and N844. Mn(2+) contacts are provided by Q830, E842, and N844. The 141-residue stretch at 938–1078 (VKLPKSGKVF…QEYLGINAAP (141 aa)) folds into the MGS-like domain. Residues 938–1083 (VKLPKSGKVF…INAAPPGTRR (146 aa)) form an allosteric domain region.

This sequence belongs to the CarB family. Composed of two chains; the small (or glutamine) chain promotes the hydrolysis of glutamine to ammonia, which is used by the large (or ammonia) chain to synthesize carbamoyl phosphate. Tetramer of heterodimers (alpha,beta)4. Mg(2+) serves as cofactor. Requires Mn(2+) as cofactor.

The catalysed reaction is hydrogencarbonate + L-glutamine + 2 ATP + H2O = carbamoyl phosphate + L-glutamate + 2 ADP + phosphate + 2 H(+). The enzyme catalyses hydrogencarbonate + NH4(+) + 2 ATP = carbamoyl phosphate + 2 ADP + phosphate + 2 H(+). The protein operates within amino-acid biosynthesis; L-arginine biosynthesis; carbamoyl phosphate from bicarbonate: step 1/1. Its pathway is pyrimidine metabolism; UMP biosynthesis via de novo pathway; (S)-dihydroorotate from bicarbonate: step 1/3. Its function is as follows. Large subunit of the glutamine-dependent carbamoyl phosphate synthetase (CPSase). CPSase catalyzes the formation of carbamoyl phosphate from the ammonia moiety of glutamine, carbonate, and phosphate donated by ATP, constituting the first step of 2 biosynthetic pathways, one leading to arginine and/or urea and the other to pyrimidine nucleotides. The large subunit (synthetase) binds the substrates ammonia (free or transferred from glutamine from the small subunit), hydrogencarbonate and ATP and carries out an ATP-coupled ligase reaction, activating hydrogencarbonate by forming carboxy phosphate which reacts with ammonia to form carbamoyl phosphate. This Myxococcus xanthus (strain DK1622) protein is Carbamoyl phosphate synthase large chain.